A 433-amino-acid polypeptide reads, in one-letter code: Urokinase-type plasminogen activator (433 aa).

The first 20 residues, 1–20 (MRVLLACLLVCALVVSDSDG), serve as a signal peptide directing secretion. The region spanning 29–65 (GESNCGCLNGGKCVTYKYFSNIQRCSCPKKFQGEHCE) is the EGF-like domain. Intrachain disulfides connect Cys-33/Cys-41, Cys-35/Cys-53, Cys-55/Cys-64, Cys-72/Cys-153, Cys-93/Cys-135, and Cys-124/Cys-148. Positions 36–59 (LNGGKCVTYKYFSNIQRCSCPKKF) are binds urokinase plasminogen activator surface receptor. The Kringle domain maps to 72–153 (CYQGNGHSYR…FVQFCMVQDC (82 aa)). Residues 154 to 180 (SVGKSPSSPREKEEFQCGQKALRPRFK) form a connecting peptide region. Ser-160 carries the post-translational modification Phosphoserine. 6 disulfide bridges follow: Cys-170-Cys-301, Cys-211-Cys-227, Cys-219-Cys-290, Cys-315-Cys-384, Cys-347-Cys-363, and Cys-374-Cys-402. The Peptidase S1 domain occupies 181 to 426 (IVGGQVTNAE…FLPWINTHTR (246 aa)). Active-site charge relay system residues include His-226 and Asp-277. Residue Ser-378 is the Charge relay system of the active site.

The protein belongs to the peptidase S1 family. Found in high and low molecular mass forms. Each consists of two chains, A and B. The high molecular mass form contains a long chain A which is cleaved to yield a short chain A. Forms heterodimer with SERPINA5. Binds LRP1B; binding is followed by internalization and degradation. Interacts with MRC2. Interacts with PLAUR. In complex with SERPINE1, interacts with PLAUR/uPAR. Interacts with SORL1 and LRP1, either alone or in complex with SERPINE1; these interactions are abolished in the presence of LRPAP1/RAP. The ternary complex composed of PLAUR-PLAU-PAI1 also interacts with SORLA. Post-translationally, produced as an inactive single-chain protein (pro-uPA or sc-uPA), is processed into the active disulfide-linked two-chain form of PLAU/uPA by a proteolytic event mediated, at least, by TMPRSS4.

Its subcellular location is the secreted. The catalysed reaction is Specific cleavage of Arg-|-Val bond in plasminogen to form plasmin.. Its activity is regulated as follows. Inhibited by SERPINA5. Inhibited by SERPINE1. Its function is as follows. Specifically cleaves the zymogen plasminogen to form the active enzyme plasmin. The polypeptide is Urokinase-type plasminogen activator (PLAU) (Bos taurus (Bovine)).